A 407-amino-acid polypeptide reads, in one-letter code: Nicotinate phosphoribosyltransferase (407 aa).

A Phosphohistidine; by autocatalysis modification is found at histidine 228.

This sequence belongs to the NAPRTase family. Transiently phosphorylated on a His residue during the reaction cycle. Phosphorylation strongly increases the affinity for substrates and increases the rate of nicotinate D-ribonucleotide production. Dephosphorylation regenerates the low-affinity form of the enzyme, leading to product release.

It carries out the reaction nicotinate + 5-phospho-alpha-D-ribose 1-diphosphate + ATP + H2O = nicotinate beta-D-ribonucleotide + ADP + phosphate + diphosphate. Its pathway is cofactor biosynthesis; NAD(+) biosynthesis; nicotinate D-ribonucleotide from nicotinate: step 1/1. Its activity is regulated as follows. 100-fold more active in the presence of saturating ATP. Its function is as follows. Catalyzes the synthesis of beta-nicotinate D-ribonucleotide from nicotinate and 5-phospho-D-ribose 1-phosphate at the expense of ATP. Functions in the deamidating salvage pathway for production of NAD from nicotinamide. Displays a strict preference for nicotinate over nicotinamide substrate. This is Nicotinate phosphoribosyltransferase from Acinetobacter baylyi (strain ATCC 33305 / BD413 / ADP1).